The following is a 339-amino-acid chain: Major pollen allergen Lol p 5b (339 aa).

Residues 1–25 (MAVQKHTVALFLAVALVAGPAASYA) form the signal peptide. A run of 9 repeats spans residues 32-34 (PAT), 35-37 (PAT), 38-40 (PAA), 41-43 (PAT), 44-46 (AAT), 47-49 (PAT), 50-52 (PAT), 53-55 (PAT), and 56-58 (PAA). A 9 X 3 AA tandem repeats of [PA]-A-[TA] region spans residues 32-58 (PATPATPAAPATAATPATPATPATPAA). Residues 36–58 (ATPAAPATAATPATPATPATPAA) show a composition bias toward low complexity. The tract at residues 36–65 (ATPAAPATAATPATPATPATPAAVPSGKAT) is disordered. The 2-1; truncated repeat unit spans residues 285–290 (ATPAAA). Positions 285–334 (ATPAAAATATPTPAAATATATPAAAYATATPAAATATATPAAATATPAAA) are 6 X 9 AA approximate tandem repeats of T-A-T-A-T-P-A-A-A. 4 repeat units span residues 292 to 300 (TATPTPAAA), 301 to 309 (TATATPAAA), 310 to 318 (YATATPAAA), and 319 to 327 (TATATPAAA). The 2-6; truncated repeat unit spans residues 328-334 (TATPAAA).

It belongs to the Poa p IX/Phl p VI allergen family. In terms of tissue distribution, pollen, starch granules.

This is Major pollen allergen Lol p 5b from Lolium perenne (Perennial ryegrass).